The primary structure comprises 152 residues: Cuticle protein 64 (152 aa).

7 tandem repeats follow at residues 27–30 (AAPA), 33–37 (AAPAV), 39–42 (AAPA), 86–89 (AAPV), 92–95 (AAPA), 98–101 (AAPA), and 127–130 (AAPA).

Functionally, component of the cuticle of migratory locust which contains more than 100 different structural proteins. The chain is Cuticle protein 64 from Locusta migratoria (Migratory locust).